The primary structure comprises 461 residues: Epidermin leader peptide-processing serine protease EpiP (461 aa).

The N-terminal stretch at 1-23 (MNKFKFFIVFLILSLVFLQNEYA) is a signal peptide. The 339-residue stretch at 121–459 (QWDMRKITNE…NGKLDVYKLL (339 aa)) folds into the Peptidase S8 domain. Active-site charge relay system residues include D149, H194, and S402.

Belongs to the peptidase S8 family.

Its pathway is antibiotic biosynthesis; epidermin biosynthesis. Protease which cleaves the matured lantibiotic from the modified prepeptide. This chain is Epidermin leader peptide-processing serine protease EpiP (epiP), found in Staphylococcus epidermidis.